The primary structure comprises 138 residues: Translation initiation factor IF-1, chloroplastic (138 aa).

Residues Met1–Ser53 constitute a chloroplast transit peptide. Positions Ala58–Arg133 constitute an S1-like domain.

This sequence belongs to the IF-1 family. In terms of assembly, component of the 30S ribosomal translation pre-initiation complex which assembles on the 30S ribosome in the order IF-2 and IF-3, IF-1 and N-formylmethionyl-tRNA(fMet); mRNA recruitment can occur at any time during PIC assembly.

It is found in the plastid. The protein resides in the chloroplast. Its function is as follows. One of the essential components for the initiation of protein synthesis. Stabilizes the binding of IF-2 and IF-3 on the 30S subunit to which N-formylmethionyl-tRNA(fMet) subsequently binds. Helps modulate mRNA selection, yielding the 30S pre-initiation complex (PIC). Upon addition of the 50S ribosomal subunit IF-1, IF-2 and IF-3 are released leaving the mature 70S translation initiation complex. The polypeptide is Translation initiation factor IF-1, chloroplastic (infA) (Glycine max (Soybean)).